We begin with the raw amino-acid sequence, 274 residues long: Large ribosomal subunit protein uL2 (274 aa).

Residues 223 to 274 (VAMNPVDHPHGGGEGRTSGGRHPVTPWGVPTKGYKTRSNKRTDKYIVRRRNK) are disordered.

The protein belongs to the universal ribosomal protein uL2 family. As to quaternary structure, part of the 50S ribosomal subunit. Forms a bridge to the 30S subunit in the 70S ribosome.

One of the primary rRNA binding proteins. Required for association of the 30S and 50S subunits to form the 70S ribosome, for tRNA binding and peptide bond formation. It has been suggested to have peptidyltransferase activity; this is somewhat controversial. Makes several contacts with the 16S rRNA in the 70S ribosome. The sequence is that of Large ribosomal subunit protein uL2 from Shewanella putrefaciens (strain CN-32 / ATCC BAA-453).